A 365-amino-acid polypeptide reads, in one-letter code: tRNA-specific 2-thiouridylase MnmA (365 aa).

ATP is bound by residues 14-21 (AMSGGVDS) and Leu40. The active-site Nucleophile is the Cys108. Cys108 and Cys204 are disulfide-bonded. Gly132 provides a ligand contact to ATP. The interval 154–156 (KDQ) is interaction with tRNA. Residue Cys204 is the Cysteine persulfide intermediate of the active site.

Belongs to the MnmA/TRMU family.

The protein resides in the cytoplasm. The enzyme catalyses S-sulfanyl-L-cysteinyl-[protein] + uridine(34) in tRNA + AH2 + ATP = 2-thiouridine(34) in tRNA + L-cysteinyl-[protein] + A + AMP + diphosphate + H(+). Its function is as follows. Catalyzes the 2-thiolation of uridine at the wobble position (U34) of tRNA, leading to the formation of s(2)U34. The chain is tRNA-specific 2-thiouridylase MnmA from Rickettsia rickettsii (strain Iowa).